We begin with the raw amino-acid sequence, 481 residues long: Proline--tRNA ligase (481 aa).

This sequence belongs to the class-II aminoacyl-tRNA synthetase family. ProS type 3 subfamily. Homodimer.

The protein localises to the cytoplasm. It catalyses the reaction tRNA(Pro) + L-proline + ATP = L-prolyl-tRNA(Pro) + AMP + diphosphate. Catalyzes the attachment of proline to tRNA(Pro) in a two-step reaction: proline is first activated by ATP to form Pro-AMP and then transferred to the acceptor end of tRNA(Pro). Can inadvertently accommodate and process cysteine. Misacylated Cys-tRNA(Pro) is not edited by ProRS; this function may be provided by ProX. The protein is Proline--tRNA ligase (proS) of Acetoanaerobium sticklandii (strain ATCC 12662 / DSM 519 / JCM 1433 / CCUG 9281 / NCIMB 10654 / HF) (Clostridium sticklandii).